Consider the following 578-residue polypeptide: Cyclin-SDS (578 aa).

Residues 1–31 (MKEIAMRNSKRKPEPTPFAGKKLRSTRLRRK) are disordered. A compositionally biased stretch (basic residues) spans 21-31 (KKLRSTRLRRK).

The protein belongs to the cyclin family. May interact with CDKA-1 and CDKB1-1.

Its function is as follows. Meiosis-specific cyclin. Required for normal homolog synapsis and recombination in early to mid-prophase 1. May regulate the timing of sister chromatid separation. This Arabidopsis thaliana (Mouse-ear cress) protein is Cyclin-SDS (SDS).